We begin with the raw amino-acid sequence, 140 residues long: MGPRRRSRKPEAPRRRSPSPTPTPGPSRRGPSLGASSHQHSRRRQGWLKEIRKLQKSTHLLIRKLPFSRLAREICVKFTRGVDFNWQAQALLALQEAAEAFLVHLFEDAYLLTLHAGRVTLFPKDVQLARRIRGLEEGLG.

Positions 1–46 (MGPRRRSRKPEAPRRRSPSPTPTPGPSRRGPSLGASSHQHSRRRQG) are disordered. N,N,N-trimethylglycine is present on Gly2. The residue at position 7 (Ser7) is a Phosphoserine; by AURKA and AURKB. Residues Ser17, Ser19, and Ser27 each carry the phosphoserine modification. Residues 26–37 (PSRRGPSLGASS) show a composition bias toward low complexity. Positions 39 to 54 (QHSRRRQGWLKEIRKL) are important for flexibility of DNA ends that protrude from nucleosomes. Residue Ser68 is modified to Phosphoserine. A CATD region spans residues 75-116 (CVKFTRGVDFNWQAQALLALQEAAEAFLVHLFEDAYLLTLHA).

It belongs to the histone H3 family. In terms of assembly, component of centromeric nucleosomes, where DNA is wrapped around a histone octamer core. The octamer contains two molecules each of H2A, H2B, CENPA and H4 assembled in one CENPA-H4 heterotetramer and two H2A-H2B heterodimers. CENPA modulates the DNA-binding characteristics of nucleosomes so that protruding DNA ends have higher flexibility than in nucleosomes containing conventional histone H3. Inhibits binding of histone H1 to nucleosomes, since histone H1 binds preferentially to rigid DNA linkers that protrude from nucleosomes. Nucleosomes containing CENPA also contain histone H2A variants such as MACROH2A and H2A.Z/H2AZ1. The CENPA-H4 heterotetramer is more compact and structurally more rigid than corresponding H3-H4 heterotetramers. Can assemble into nucleosomes that contain both CENPA and histone H3.3; these nucleosomes interact with a single CENPC chain. Heterotrimer composed of HJURP, CENPA and histone H4, where HJURP interacts with the dimer formed by CENPA and histone H4 and prevents tetramerization of CENPA and H4. Component of the CENPA-NAC complex, at least composed of CENPA, CENPC, CENPH, CENPM, CENPN, CENPT and CENPU. Interacts (via CATD domain) with HJURP; the interaction is direct and is required for its localization to centromeres. Interacts with CENPC, CENPN and CENPT; interaction is direct. Part of a centromere complex consisting of CENPA, CENPT and CENPW. Identified in centromere complexes containing histones H2A, H2B and H4, and at least CENPA, CENPB, CENPC, CENPT, CENPN, HJURP, SUPT16H, SSRP1 and RSF1. Can self-associate. The CENPA-H4 heterotetramer can bind DNA by itself (in vitro). Interacts with CDK1, PPP1CA and RBBP7. (Microbial infection) Interacts directly with herpes virus HHV-1 protein ICP0. Ubiquitinated. Interaction with herpes virus HSV-1 ICP0 protein, leads to its degradation by the proteasome pathway. In terms of processing, trimethylated by NTMT1 at the N-terminal glycine after cleavage of Met-1. Methylation is low before incorporation into nucleosomes and increases with cell cycle progression, with the highest levels in mitotic nucleosomes. Post-translationally, phosphorylated by CDK1 at Ser-68 during early mitosis; this abolishes association with chromatin and centromeres, prevents interaction with HJURP and thereby prevents premature assembly of CENPA into centromeres. Dephosphorylated at Ser-68 by PPP1CA during late mitosis. Phosphorylation of Ser-7 by AURKA and AURKB during prophase is required for localization of AURKA and AURKB at inner centromere and is essential for normal cytokinesis. Initial phosphorylation during prophase is mediated by AURKA and is maintained by AURKB. Poly-ADP-ribosylated by PARP1.

It is found in the nucleus. The protein localises to the chromosome. The protein resides in the centromere. In terms of biological role, histone H3-like nucleosomal protein that is specifically found in centromeric nucleosomes. Replaces conventional H3 in the nucleosome core of centromeric chromatin that serves as an assembly site for the inner kinetochore. The presence of CENPA subtly modifies the nucleosome structure and the way DNA is wrapped around the nucleosome and gives rise to protruding DNA ends that are less well-ordered and rigid compared to nucleosomes containing histone H3. May serve as an epigenetic mark that propagates centromere identity through replication and cell division. Required for recruitment and assembly of kinetochore proteins, and as a consequence required for progress through mitosis, chromosome segregation and cytokinesis. This Homo sapiens (Human) protein is Histone H3-like centromeric protein A (CENPA).